A 629-amino-acid chain; its full sequence is Chaperone protein HtpG (629 aa).

The interval 1–335 is a; substrate-binding; that stretch reads MSSNPTSSVR…TEDLPLNVSR (335 aa). A b region spans residues 336-547; the sequence is ELVQASPVMA…KDALDSQFEK (212 aa). Residues 548 to 629 form a c region; sequence MMKMMNKDAD…NELVEAATRS (82 aa).

The protein belongs to the heat shock protein 90 family. As to quaternary structure, homodimer.

It localises to the cytoplasm. In terms of biological role, molecular chaperone. Has ATPase activity. In Chlorobaculum tepidum (strain ATCC 49652 / DSM 12025 / NBRC 103806 / TLS) (Chlorobium tepidum), this protein is Chaperone protein HtpG.